We begin with the raw amino-acid sequence, 893 residues long: Desmocollin-1 (893 aa).

An N-terminal signal peptide occupies residues 1–29 (MAVASAAPGSIFWKQLLFSLLVLILFCDA). A propeptide spanning residues 30 to 132 (CQKISLQVPS…KDAVLRRTKR (103 aa)) is cleaved from the precursor. 5 Cadherin domains span residues 133–240 (RWAP…APYF), 241–352 (ENKL…APYF), 353–470 (TETS…GPEC), 471–574 (QPPV…DHPP), and 575–682 (QIKQ…LSRE). At 133-692 (RWAPIPCSLM…AALANVFLGK (560 aa)) the chain is on the extracellular side. The N-linked (GlcNAc...) asparagine glycan is linked to N163. The residue at position 383 (T383) is a Phosphothreonine. Residues N398 and N545 are each glycosylated (N-linked (GlcNAc...) asparagine). A helical membrane pass occupies residues 693 to 715 (WAILAMVLGSVLLLCILFTCFCV). Residues 716–893 (TVKKTVKKCF…RTLAKTCVKK (178 aa)) lie on the Cytoplasmic side of the membrane.

Binds to JUP/plakoglobin. Post-translationally, isoform 1A is phosphorylated on a serine but isoform 1B is not. In terms of tissue distribution, epidermis and weakly in tongue papillae.

The protein localises to the cell membrane. It localises to the cell junction. It is found in the desmosome. A component of desmosome cell-cell junctions which are required for positive regulation of cellular adhesion. Required for desmosome adhesion strength between the granular layers of the epidermis, as a result moderates epidermal proliferation and differentiation. Is therefore required to maintain postnatal epidermal barrier function and normal hair follicle morphology into adulthood. This is Desmocollin-1 (DSC1) from Bos taurus (Bovine).